The following is a 522-amino-acid chain: Lysine--tRNA ligase (522 aa).

The short motif at 44–52 (PSGLPHIGT) is the 'HIGH' region element. A 'KMSKS' region motif is present at residues 290 to 294 (KISKS). Lys293 lines the ATP pocket.

This sequence belongs to the class-I aminoacyl-tRNA synthetase family.

The protein resides in the cytoplasm. It carries out the reaction tRNA(Lys) + L-lysine + ATP = L-lysyl-tRNA(Lys) + AMP + diphosphate. The polypeptide is Lysine--tRNA ligase (Rickettsia conorii (strain ATCC VR-613 / Malish 7)).